A 578-amino-acid chain; its full sequence is A-type ATP synthase subunit A (578 aa).

228–235 is a binding site for ATP; the sequence is GPFGSGKT.

It belongs to the ATPase alpha/beta chains family. Has multiple subunits with at least A(3), B(3), C, D, E, F, H, I and proteolipid K(x).

The protein resides in the cell membrane. It catalyses the reaction ATP + H2O + 4 H(+)(in) = ADP + phosphate + 5 H(+)(out). Component of the A-type ATP synthase that produces ATP from ADP in the presence of a proton gradient across the membrane. The A chain is the catalytic subunit. This is A-type ATP synthase subunit A from Methanococcoides burtonii (strain DSM 6242 / NBRC 107633 / OCM 468 / ACE-M).